The primary structure comprises 120 residues: Small ribosomal subunit protein uS13 (120 aa).

Residues 93 to 120 are disordered; the sequence is RRGLPCRGQKTKTNARTRKGKRKTVGAA.

It belongs to the universal ribosomal protein uS13 family. As to quaternary structure, part of the 30S ribosomal subunit. Forms a loose heterodimer with protein S19. Forms two bridges to the 50S subunit in the 70S ribosome.

Located at the top of the head of the 30S subunit, it contacts several helices of the 16S rRNA. In the 70S ribosome it contacts the 23S rRNA (bridge B1a) and protein L5 of the 50S subunit (bridge B1b), connecting the 2 subunits; these bridges are implicated in subunit movement. Contacts the tRNAs in the A and P-sites. The protein is Small ribosomal subunit protein uS13 of Sulfurovum sp. (strain NBC37-1).